The following is a 202-amino-acid chain: IVGTIAAAAMTVTHVASGRLNDYILKLEEPNGILLHFKAPLFSIIQEGYAVPKSSLVGTGTSNNEGLLDRNGVDEMLNEKYAVQYASETLFSKDLYNAASNPDSAVGFKLMESPEININERNDWPVASTLLRSSNVNVNLKNSDTPLNLAYFIDQGADINTRNGHLNIVKYLVEEEDLSVDGSKYGIDMTIRTALDIATDLK.

10 ANK repeats span residues 95–109 (LYNAASNPDSAVGFK), 110–120 (LMESPEININE), 122–132 (NDWPVASTLLR), 133–138 (SSNVNV), 142–161 (NSDTPLNLAYFIDQGADINT), 163–170 (NGHLNIVK), 171–182 (YLVEEEDLSVDG), K184, 185–191 (YGIDMTI), and 193–202 (TALDIATDLK). Residues 175 to 181 (EEDLSVD) are 4C4.1 epitope.

Belongs to the cationic peptide 01 (latrotoxin) family. 03 (alpha-latrotoxin) subfamily. In terms of assembly, homotetramer in membranes. In terms of processing, processed by furin-like proteases at both the N- and C-termini. Contains 1 disulfide bond. In terms of tissue distribution, expressed in venom gland, cephalothorax, and abdomen tissues from both males and females.

The protein localises to the secreted. The protein resides in the target cell membrane. In terms of biological role, presynaptic neurotoxin that causes massive release of neurotransmitters from vertebrate (but not invertebrate) nerve terminals and endocrine cells via a complex mechanism involving activation of receptor(s) and toxin insertion into the plasma membrane with subsequent pore formation. Binds to neurexin-1-alpha (NRXN1) in a calcium dependent manner, adhesion G protein-coupled receptor L1 (ADGRL1, also termed latrophilin-1 and calcium-independent receptor of latrotoxin (CIRL)), and receptor-type tyrosine-protein phosphatase S (PTPRS), also termed PTP sigma. NRXN1 and PTPRS are suggested to provide a platform for binding and subsequent pore formation events. In contrast, binding to ADGRL1 does not involve oligomerization and channel formation, but direct downstream stimulation of the synaptic fusion machinery. This is Alpha-latrotoxin-Lm1a from Latrodectus mactans (Black widow spider).